Reading from the N-terminus, the 150-residue chain is Transcription antitermination protein NusB (150 aa).

It belongs to the NusB family.

Its function is as follows. Involved in transcription antitermination. Required for transcription of ribosomal RNA (rRNA) genes. Binds specifically to the boxA antiterminator sequence of the ribosomal RNA (rrn) operons. The polypeptide is Transcription antitermination protein NusB (Streptococcus pyogenes serotype M6 (strain ATCC BAA-946 / MGAS10394)).